We begin with the raw amino-acid sequence, 207 residues long: Large ribosomal subunit protein uL4 (207 aa).

Positions 45–80 are disordered; sequence RQGTHAVKNRSEVRGGGRKPWRQKGTGRARQGSTRS. Positions 60–71 are enriched in basic residues; sequence GGRKPWRQKGTG.

The protein belongs to the universal ribosomal protein uL4 family. Part of the 50S ribosomal subunit.

One of the primary rRNA binding proteins, this protein initially binds near the 5'-end of the 23S rRNA. It is important during the early stages of 50S assembly. It makes multiple contacts with different domains of the 23S rRNA in the assembled 50S subunit and ribosome. In terms of biological role, forms part of the polypeptide exit tunnel. The polypeptide is Large ribosomal subunit protein uL4 (Oceanobacillus iheyensis (strain DSM 14371 / CIP 107618 / JCM 11309 / KCTC 3954 / HTE831)).